A 165-amino-acid polypeptide reads, in one-letter code: Type 3 secretion system regulator YopR (165 aa).

The interval 2-11 (TVTLNRGSIT) is 5' secretion signal. The tract at residues 131 to 149 (PYLSELINKELMILLPYNS) is 3' secretion signal.

Belongs to the YopR family.

The protein localises to the secreted. Functionally, may be involved in the regulation of the assembly of the type III secretion system (T3SS), also called injectisome, which is used to inject bacterial effector proteins into eukaryotic host cells. May control the secretion and/or polymerization of YscF/SctF, the principal component of the needle filament, thereby impacting the assembly of the T3SS. Involved in pathogenesis. Essential for the establishment of Yersinia infections in a mouse model system. This Yersinia enterocolitica protein is Type 3 secretion system regulator YopR.